Here is a 325-residue protein sequence, read N- to C-terminus: Probable cell division protein WhiA (325 aa).

The H-T-H motif DNA-binding region spans 273 to 306 (SLEELGALADPPLTKDAVAGRIRRLLALADKRAN).

Belongs to the WhiA family.

Its function is as follows. Involved in cell division and chromosome segregation. The polypeptide is Probable cell division protein WhiA (Frankia casuarinae (strain DSM 45818 / CECT 9043 / HFP020203 / CcI3)).